Here is a 700-residue protein sequence, read N- to C-terminus: Methionine--tRNA ligase (700 aa).

Residues 13-23 (PYANGDIHLGH) carry the 'HIGH' region motif. Zn(2+) is bound by residues cysteine 144, cysteine 147, cysteine 157, and cysteine 160. The 'KMSKS' region signature appears at 341-345 (KMSKS). Residue lysine 344 participates in ATP binding. Residues 598 to 700 (DFAKVEMKVA…DNCVIGDLLA (103 aa)) form the tRNA-binding domain.

Belongs to the class-I aminoacyl-tRNA synthetase family. MetG type 1 subfamily. Homodimer. It depends on Zn(2+) as a cofactor.

The protein resides in the cytoplasm. It carries out the reaction tRNA(Met) + L-methionine + ATP = L-methionyl-tRNA(Met) + AMP + diphosphate. In terms of biological role, is required not only for elongation of protein synthesis but also for the initiation of all mRNA translation through initiator tRNA(fMet) aminoacylation. The sequence is that of Methionine--tRNA ligase from Psychrobacter arcticus (strain DSM 17307 / VKM B-2377 / 273-4).